The primary structure comprises 390 residues: 8-amino-7-oxononanoate synthase (390 aa).

A substrate-binding site is contributed by R19. 106-107 (GY) is a binding site for pyridoxal 5'-phosphate. Position 131 (H131) interacts with substrate. Positions 176, 204, and 233 each coordinate pyridoxal 5'-phosphate. At K236 the chain carries N6-(pyridoxal phosphate)lysine. T350 lines the substrate pocket.

It belongs to the class-II pyridoxal-phosphate-dependent aminotransferase family. BioF subfamily. Homodimer. Pyridoxal 5'-phosphate serves as cofactor.

It catalyses the reaction 6-carboxyhexanoyl-[ACP] + L-alanine + H(+) = (8S)-8-amino-7-oxononanoate + holo-[ACP] + CO2. The protein operates within cofactor biosynthesis; biotin biosynthesis. Catalyzes the decarboxylative condensation of pimeloyl-[acyl-carrier protein] and L-alanine to produce 8-amino-7-oxononanoate (AON), [acyl-carrier protein], and carbon dioxide. In Pseudomonas putida (strain GB-1), this protein is 8-amino-7-oxononanoate synthase.